The chain runs to 181 residues: Large ribosomal subunit protein uL6 (181 aa).

It belongs to the universal ribosomal protein uL6 family. Part of the 50S ribosomal subunit.

This protein binds to the 23S rRNA, and is important in its secondary structure. It is located near the subunit interface in the base of the L7/L12 stalk, and near the tRNA binding site of the peptidyltransferase center. The polypeptide is Large ribosomal subunit protein uL6 (Synechococcus sp. (strain JA-3-3Ab) (Cyanobacteria bacterium Yellowstone A-Prime)).